The primary structure comprises 248 residues: uncharacterized protein (248 aa).

6 helical membrane passes run 65–85 (IIIY…QFLT), 105–125 (SITS…ILWY), 126–146 (ISWT…LGFI), 156–176 (LCCF…TLLI), 188–208 (LILN…SDYS), and 222–242 (VIYI…YKYT).

It is found in the cell membrane. This is an uncharacterized protein from Rickettsia prowazekii (strain Madrid E).